The following is a 462-amino-acid chain: tRNA modification GTPase MnmE (462 aa).

3 residues coordinate (6S)-5-formyl-5,6,7,8-tetrahydrofolate: arginine 34, glutamate 92, and lysine 131. Residues 227–386 form the TrmE-type G domain; the sequence is GLQVVIAGKP…LIDAITAHAG (160 aa). Asparagine 237 lines the K(+) pocket. GTP-binding positions include 237–242, 256–262, and 281–284; these read NAGKSS, TDIAGTT, and DTAG. Serine 241 lines the Mg(2+) pocket. K(+) is bound by residues threonine 256, isoleucine 258, and threonine 261. Threonine 262 lines the Mg(2+) pocket. Residue lysine 462 participates in (6S)-5-formyl-5,6,7,8-tetrahydrofolate binding.

Belongs to the TRAFAC class TrmE-Era-EngA-EngB-Septin-like GTPase superfamily. TrmE GTPase family. In terms of assembly, homodimer. Heterotetramer of two MnmE and two MnmG subunits. Requires K(+) as cofactor.

It is found in the cytoplasm. Functionally, exhibits a very high intrinsic GTPase hydrolysis rate. Involved in the addition of a carboxymethylaminomethyl (cmnm) group at the wobble position (U34) of certain tRNAs, forming tRNA-cmnm(5)s(2)U34. This Acinetobacter baylyi (strain ATCC 33305 / BD413 / ADP1) protein is tRNA modification GTPase MnmE.